The following is a 125-amino-acid chain: Glycine cleavage system H protein (125 aa).

Positions 23 to 103 (TALVGITDFA…PYNAWLIKMK (81 aa)) constitute a Lipoyl-binding domain. At Lys64 the chain carries N6-lipoyllysine.

This sequence belongs to the GcvH family. As to quaternary structure, the glycine cleavage system is composed of four proteins: P, T, L and H. It depends on (R)-lipoate as a cofactor.

The glycine cleavage system catalyzes the degradation of glycine. The H protein shuttles the methylamine group of glycine from the P protein to the T protein. The polypeptide is Glycine cleavage system H protein (Chlorobium chlorochromatii (strain CaD3)).